Here is a 146-residue protein sequence, read N- to C-terminus: Large ribosomal subunit protein uL23m (146 aa).

The interval 108–138 (PDLFPEKDPRSPEPLEEELPQQRQSSDLRCP) is disordered. The segment covering 111–120 (FPEKDPRSPE) has biased composition (basic and acidic residues).

It belongs to the universal ribosomal protein uL23 family. As to quaternary structure, component of the mitochondrial ribosome large subunit (39S) which comprises a 16S rRNA and about 50 distinct proteins.

It is found in the mitochondrion. The sequence is that of Large ribosomal subunit protein uL23m (Mrpl23) from Mus musculus (Mouse).